We begin with the raw amino-acid sequence, 199 residues long: MPQPLILASTSEIRAKMLSNAGVPHTTSGARIDEEMVKEALLAEQASPRDIADTLAEMKARKISDKTPGAIVLGCDQVLDHRGVLLSKPVDSHDALTQLQALRNDRHTLLSAAVICEDGKPVWRHVGVVRLRMHDVSDAYLQDYVARNWDSIRHAVGAYKLEEEGVRLFSRIDGDYFTVLGLPLLELLSYLALRGDLPR.

Residue Asp76 is the Proton acceptor of the active site.

It belongs to the Maf family. The cofactor is a divalent metal cation.

It localises to the cytoplasm. The catalysed reaction is a ribonucleoside 5'-triphosphate + H2O = a ribonucleoside 5'-phosphate + diphosphate + H(+). It catalyses the reaction a 2'-deoxyribonucleoside 5'-triphosphate + H2O = a 2'-deoxyribonucleoside 5'-phosphate + diphosphate + H(+). In terms of biological role, nucleoside triphosphate pyrophosphatase. May have a dual role in cell division arrest and in preventing the incorporation of modified nucleotides into cellular nucleic acids. This Roseobacter denitrificans (strain ATCC 33942 / OCh 114) (Erythrobacter sp. (strain OCh 114)) protein is Nucleoside triphosphate pyrophosphatase.